Consider the following 231-residue polypeptide: Ribosomal RNA small subunit methyltransferase nep-1 (231 aa).

S-adenosyl-L-methionine is bound by residues M161, G188, G193, and 206–211 (ISNYPL).

It belongs to the class IV-like SAM-binding methyltransferase superfamily. RNA methyltransferase NEP1 family. Homodimer.

The protein localises to the nucleus. The protein resides in the nucleolus. It catalyses the reaction a pseudouridine in rRNA + S-adenosyl-L-methionine = an N(1)-methylpseudouridine in rRNA + S-adenosyl-L-homocysteine + H(+). S-adenosyl-L-methionine-dependent pseudouridine N(1)-methyltransferase that methylates a pseudouridine in 18S rRNA. Involved the biosynthesis of the hypermodified N1-methyl-N3-(3-amino-3-carboxypropyl) pseudouridine (m1acp3-Psi) conserved in eukaryotic 18S rRNA. Also has an essential role in 40S ribosomal subunit biogenesis independent on its methyltransferase activity, facilitating the incorporation of ribosomal protein S19 during the formation of pre-ribosomes. The chain is Ribosomal RNA small subunit methyltransferase nep-1 from Caenorhabditis elegans.